The chain runs to 540 residues: Telomerase Cajal body protein 1 (540 aa).

Pro residues predominate over residues 1–10 (MKTPEAPPLA). Residues 1-126 (MKTPEAPPLA…GEDVEGVSEE (126 aa)) form a disordered region. A phosphoserine mark is found at Ser-26, Ser-30, Ser-54, Ser-64, Ser-85, and Ser-90. A compositionally biased stretch (acidic residues) spans 116–126 (PGEDVEGVSEE). 6 WD repeats span residues 158–197 (QPEN…YNEG), 213–258 (EGDT…LRAS), 263–304 (NHLD…RDCE), 314–355 (GQSG…ALLG), 356–396 (GHQG…HPLW), and 402–441 (VTTN…LESK). Thr-480 is modified (phosphothreonine). Ser-482 carries the phosphoserine modification. Residues 520–540 (SDAHQEEMGQGRTEGGGGEFT) are disordered. Over residues 531–540 (RTEGGGGEFT) the composition is skewed to gly residues.

Belongs to the TCAB1 family. Component of the telomerase holoenzyme complex composed of one molecule of TERT, one molecule of WRAP53/TCAB1, two molecules of H/ACA ribonucleoprotein complex subunits DKC1, NOP10, NHP2 and GAR1, and a telomerase RNA template component (TERC). The telomerase holoenzyme complex is associated with TEP1, SMG6/EST1A and POT1. Interacts with the chaperonin-containing T-complex (TRiC) complex; which mediates the folding of WRAP53/TCAB1. Interacts with COIL. Interacts with SMN1. Interacts with RNF8. Interacts with histone H2AX. Post-translationally, phosphorylated at Ser-64 by ATM in response to DNA damage, promoting its interaction with histone H2AX and localization to sites of DNA double-strand breaks.

The protein localises to the nucleus. The protein resides in the cajal body. It localises to the chromosome. Its subcellular location is the telomere. Its function is as follows. RNA chaperone that plays a key role in telomere maintenance and RNA localization to Cajal bodies. Specifically recognizes and binds the Cajal body box (CAB box) present in both small Cajal body RNAs (scaRNAs) and telomerase RNA template component (TERC). Essential component of the telomerase holoenzyme complex, a ribonucleoprotein complex essential for the replication of chromosome termini that elongates telomeres in most eukaryotes. In the telomerase holoenzyme complex, required to stimulate the catalytic activity of the complex. Acts by specifically binding the CAB box of the TERC RNA and controlling the folding of the CR4/CR5 region of the TERC RNA, a critical step for telomerase activity. In addition, also controls telomerase holoenzyme complex localization to Cajal body. During S phase, required for delivery of TERC to telomeres during S phase and for telomerase activity. In addition to its role in telomere maintenance, also required for Cajal body formation, probably by mediating localization of scaRNAs to Cajal bodies. Also plays a role in DNA repair: phosphorylated by ATM in response to DNA damage and relocalizes to sites of DNA double-strand breaks to promote the repair of DNA double-strand breaks. Acts by recruiting the ubiquitin ligase RNF8 to DNA breaks and promote both homologous recombination (HR) and non-homologous end joining (NHEJ). The polypeptide is Telomerase Cajal body protein 1 (Bos taurus (Bovine)).